The primary structure comprises 380 residues: Acyl-coenzyme A diphosphatase NUDT19 (380 aa).

Residues 8–264 enclose the Nudix hydrolase domain; it reads WKEAATLIVA…KIWIPPPQFY (257 aa). The Nudix box motif lies at 115–136; that stretch reads SLIPGEVATRICAIRETFEESG. Mg(2+) is bound by residues glutamate 130 and glutamate 134. A Microbody targeting signal motif is present at residues 378 to 380; the sequence is NKL.

The protein belongs to the Nudix hydrolase family. As to quaternary structure, monomer. The cofactor is Mg(2+). Mn(2+) serves as cofactor.

The protein localises to the peroxisome. The catalysed reaction is an acyl-CoA + H2O = an acyl-4'-phosphopantetheine + adenosine 3',5'-bisphosphate + 2 H(+). The enzyme catalyses CoA + H2O = (R)-4'-phosphopantetheine + adenosine 3',5'-bisphosphate + 2 H(+). It catalyses the reaction hexanoyl-CoA + H2O = hexanoyl-4'-phosphopantetheine + adenosine 3',5'-bisphosphate + 2 H(+). It carries out the reaction octanoyl-CoA + H2O = S-octanoyl-4'-phosphopantetheine + adenosine 3',5'-bisphosphate + 2 H(+). The catalysed reaction is butanoyl-CoA + H2O = S-butanoyl-4'-phosphopantetheine + adenosine 3',5'-bisphosphate + 2 H(+). The enzyme catalyses propanoyl-CoA + H2O = propanoyl-4'-phosphopantetheine + adenosine 3',5'-bisphosphate + 2 H(+). It catalyses the reaction malonyl-CoA + H2O = malonyl-4'-phosphopantetheine + adenosine 3',5'-bisphosphate + 2 H(+). It carries out the reaction succinyl-CoA + H2O = succinyl-4'-phosphopantetheine + adenosine 3',5'-bisphosphate + 2 H(+). The catalysed reaction is choloyl-CoA + H2O = S-choloyl-4'-phosphopantetheine + adenosine 3',5'-bisphosphate + 2 H(+). The enzyme catalyses 4,8-dimethylnonanoyl-CoA + H2O = S-(4,8-dimethylnonanoyl)-4'-phosphopantetheine + adenosine 3',5'-bisphosphate + 2 H(+). It catalyses the reaction (9Z,12Z,15Z)-octadecatrienoyl-CoA + H2O = S-(9Z,12Z,15Z-octadecatrienoyl)-4'-phosphopantetheine + adenosine 3',5'-bisphosphate + 2 H(+). It carries out the reaction (9Z,12Z)-octadecadienoyl-CoA + H2O = S-(9Z,12Z-octadecadienoyl)-4'-phosphopantetheine + adenosine 3',5'-bisphosphate + 2 H(+). The catalysed reaction is (9Z)-hexadecenoyl-CoA + H2O = S-(9Z-hexadecenoyl)-4'-phosphopantetheine + adenosine 3',5'-bisphosphate + 2 H(+). The enzyme catalyses (9Z)-tetradecenoyl-CoA + H2O = S-(9Z-tetradecenoyl)-4'-phosphopantetheine + adenosine 3',5'-bisphosphate + 2 H(+). It catalyses the reaction (6Z)-octenoyl-CoA + H2O = S-(6Z-octenoyl)-4'-phosphopantetheine + adenosine 3',5'-bisphosphate + 2 H(+). It carries out the reaction hexadecanoyl-CoA + H2O = S-hexadecanoyl-4'-phosphopantetheine + adenosine 3',5'-bisphosphate + 2 H(+). The catalysed reaction is tetradecanoyl-CoA + H2O = tetradecanoyl-4'-phosphopantetheine + adenosine 3',5'-bisphosphate + 2 H(+). The enzyme catalyses dodecanoyl-CoA + H2O = S-dodecanoyl-4'-phosphopantetheine + adenosine 3',5'-bisphosphate + 2 H(+). It catalyses the reaction a 5'-end CoA-ribonucleoside in mRNA + H2O = a 5'-end phospho-adenosine-phospho-ribonucleoside in mRNA + (R)-4'-phosphopantetheine + 2 H(+). Its function is as follows. Fatty acyl-coenzyme A (CoA) diphosphatase that hydrolyzes fatty acyl-CoA to yield acyl-4'-phosphopantetheine and adenosine 3',5'-bisphosphate. Mediates the hydrolysis of a wide range of CoA esters, including choloyl-CoA and branched-chain fatty-acyl-CoA esters and at low substrate concentrations medium and long-chain fatty-acyl-CoA esters are the primary substrates. Highest activity seen with medium-chain acyl-CoA esters and higher rates of activity seen with the unsaturated acyl-CoA esters compared with the saturated esters. Exhibits decapping activity towards dpCoA-capped RNAs in vitro. The chain is Acyl-coenzyme A diphosphatase NUDT19 (nudt19) from Xenopus laevis (African clawed frog).